The primary structure comprises 414 residues: Esterase FrsA (414 aa).

Belongs to the FrsA family.

It carries out the reaction a carboxylic ester + H2O = an alcohol + a carboxylate + H(+). Its function is as follows. Catalyzes the hydrolysis of esters. This chain is Esterase FrsA, found in Escherichia coli O45:K1 (strain S88 / ExPEC).